The primary structure comprises 409 residues: Galactosylgalactosylxylosylprotein 3-beta-glucuronosyltransferase S (409 aa).

A disordered region spans residues 1–45 (MSSARLLESQTSDEDNEDIERRPHQSHSRSCSNNTTPTHPPHPMV). At 1–53 (MSSARLLESQTSDEDNEDIERRPHQSHSRSCSNNTTPTHPPHPMVRKGGVARR) the chain is on the cytoplasmic side. Residue Ser-9 is modified to Phosphoserine. Thr-11 carries the post-translational modification Phosphothreonine. A phosphoserine mark is found at Ser-12 and Ser-32. Residues 54–73 (ICLIGGALFLLLVALCYLTL) traverse the membrane as a helical; Signal-anchor for type II membrane protein segment. The Lumenal portion of the chain corresponds to 74 to 409 (SGDTRLGGSE…RENPHSKILS (336 aa)). 2 N-linked (GlcNAc...) asparagine glycosylation sites follow: Asn-102 and Asn-223. Asp-235 provides a ligand contact to Mn(2+). Glu-318 (proton acceptor) is an active-site residue. The N-linked (GlcNAc...) asparagine glycan is linked to Asn-338. The tract at residues 389-409 (EGRNALISKNGRENPHSKILS) is disordered. Positions 398–409 (NGRENPHSKILS) are enriched in basic and acidic residues.

Belongs to the glycosyltransferase 43 family. It depends on Mn(2+) as a cofactor.

It localises to the golgi apparatus membrane. The catalysed reaction is 3-O-(beta-D-galactosyl-(1-&gt;3)-beta-D-galactosyl-(1-&gt;4)-beta-D-xylosyl)-L-seryl-[protein] + UDP-alpha-D-glucuronate = 3-O-(beta-D-GlcA-(1-&gt;3)-beta-D-Gal-(1-&gt;3)-beta-D-Gal-(1-&gt;4)-beta-D-Xyl)-L-seryl-[protein] + UDP + H(+). The protein operates within protein modification; protein glycosylation. Functionally, involved in the biosynthesis of L2/HNK-1 carbohydrate epitope on both glycolipids and glycoproteins. Enzyme has a broad specificity. The sequence is that of Galactosylgalactosylxylosylprotein 3-beta-glucuronosyltransferase S (GlcAT-S) from Drosophila melanogaster (Fruit fly).